The following is a 198-amino-acid chain: Molybdenum cofactor guanylyltransferase (198 aa).

GTP-binding positions include 14–16 (LAG), Lys-27, Asp-73, and Asp-103. Position 103 (Asp-103) interacts with Mg(2+).

It belongs to the MobA family. In terms of assembly, monomer. Mg(2+) serves as cofactor.

It is found in the cytoplasm. It catalyses the reaction Mo-molybdopterin + GTP + H(+) = Mo-molybdopterin guanine dinucleotide + diphosphate. In terms of biological role, transfers a GMP moiety from GTP to Mo-molybdopterin (Mo-MPT) cofactor (Moco or molybdenum cofactor) to form Mo-molybdopterin guanine dinucleotide (Mo-MGD) cofactor. The protein is Molybdenum cofactor guanylyltransferase of Pseudomonas aeruginosa (strain ATCC 15692 / DSM 22644 / CIP 104116 / JCM 14847 / LMG 12228 / 1C / PRS 101 / PAO1).